Consider the following 669-residue polypeptide: UvrABC system protein B (669 aa).

In terms of domain architecture, Helicase ATP-binding spans 26-183 (TNFHAGIAKQ…RHLTELQYTR (158 aa)). 39–46 (GVTGSGKT) lines the ATP pocket. A Beta-hairpin motif is present at residues 92–115 (YYDYYQPEAYVPASDTFIEKDSSI). Positions 431 to 597 (QVDDLISQIN…SVVRPISDIL (167 aa)) constitute a Helicase C-terminal domain. Residues 631-666 (AAQMKMLEQQMYQHARDLEFEDAARIRDQIQRLREA) form the UVR domain.

This sequence belongs to the UvrB family. As to quaternary structure, forms a heterotetramer with UvrA during the search for lesions. Interacts with UvrC in an incision complex.

The protein localises to the cytoplasm. Its function is as follows. The UvrABC repair system catalyzes the recognition and processing of DNA lesions. A damage recognition complex composed of 2 UvrA and 2 UvrB subunits scans DNA for abnormalities. Upon binding of the UvrA(2)B(2) complex to a putative damaged site, the DNA wraps around one UvrB monomer. DNA wrap is dependent on ATP binding by UvrB and probably causes local melting of the DNA helix, facilitating insertion of UvrB beta-hairpin between the DNA strands. Then UvrB probes one DNA strand for the presence of a lesion. If a lesion is found the UvrA subunits dissociate and the UvrB-DNA preincision complex is formed. This complex is subsequently bound by UvrC and the second UvrB is released. If no lesion is found, the DNA wraps around the other UvrB subunit that will check the other stand for damage. The chain is UvrABC system protein B from Xylella fastidiosa (strain M12).